The primary structure comprises 299 residues: ATP phosphoribosyltransferase (299 aa).

The protein belongs to the ATP phosphoribosyltransferase family. Long subfamily. Mg(2+) is required as a cofactor.

The protein localises to the cytoplasm. The enzyme catalyses 1-(5-phospho-beta-D-ribosyl)-ATP + diphosphate = 5-phospho-alpha-D-ribose 1-diphosphate + ATP. It functions in the pathway amino-acid biosynthesis; L-histidine biosynthesis; L-histidine from 5-phospho-alpha-D-ribose 1-diphosphate: step 1/9. Its activity is regulated as follows. Feedback inhibited by histidine. Functionally, catalyzes the condensation of ATP and 5-phosphoribose 1-diphosphate to form N'-(5'-phosphoribosyl)-ATP (PR-ATP). Has a crucial role in the pathway because the rate of histidine biosynthesis seems to be controlled primarily by regulation of HisG enzymatic activity. The polypeptide is ATP phosphoribosyltransferase (Mannheimia succiniciproducens (strain KCTC 0769BP / MBEL55E)).